Reading from the N-terminus, the 483-residue chain is MRAQPAASHFVDGRPLEDETGAPIPVIYPATGEEIARLHEATPAVIEAALASGARAQAAWAAMRPVERARILRRASDLIRARNEELSLLETLDTGKPLQETLVADWASGADALEFFAGLAPAVTGETVPLGQDFVYTIREPLGLCVGIGAWNYPSQIACWKAAPALALGNAMVFKPSEVTPLGALKLAEILIEAGLPPGLFNVVQGRGAVGAALVTDSRVAKVSLTGSVPTGRRVYAAAAEGVRHVTMELGGKSPLIVFDDADLESAIGAAMLGNFYSAGQICSNGTRVFVQKGIKEAFLARLAERADAIRMGDPLDPEVQMGPLVSQAQLEKVLAYIEKARAEGGRLVCGGEASVSPGCYVQPTVFADVTDAMTLAREEVFGPVMAVLDFETEEEAIARANATDFGLAAGVFTADLTRAHRVVAQLQAGTCWINAYNLTPVEAPFGGVKLSGVGRENGRAAVEHYTQVKSVYVGMGPVDAPY.

Positions 27 and 93 each coordinate K(+). NAD(+) is bound at residue 149 to 151; that stretch reads GAW. Residue lysine 161 is the Charge relay system of the active site. 175–178 lines the NAD(+) pocket; it reads KPSE. Valine 179 serves as a coordination point for K(+). 228 to 231 provides a ligand contact to NAD(+); it reads SVPT. Valine 243 contacts K(+). The active-site Proton acceptor is glutamate 249. The NAD(+) site is built by glycine 251, cysteine 283, and glutamate 380. The active-site Nucleophile is cysteine 283. Cysteine 283 carries the cysteine sulfenic acid (-SOH) modification. K(+) is bound by residues lysine 450 and glycine 453. The Charge relay system role is filled by glutamate 457.

Belongs to the aldehyde dehydrogenase family. Dimer of dimers. It depends on K(+) as a cofactor.

The enzyme catalyses betaine aldehyde + NAD(+) + H2O = glycine betaine + NADH + 2 H(+). Its pathway is amine and polyamine biosynthesis; betaine biosynthesis via choline pathway; betaine from betaine aldehyde: step 1/1. Involved in the biosynthesis of the osmoprotectant glycine betaine. Catalyzes the irreversible oxidation of betaine aldehyde to the corresponding acid. This chain is Betaine aldehyde dehydrogenase, found in Cereibacter sphaeroides (strain ATCC 17029 / ATH 2.4.9) (Rhodobacter sphaeroides).